The following is a 344-amino-acid chain: Biotin synthase (344 aa).

A Radical SAM core domain is found at 65-290; sequence PEVEVEGIIS…RTMLRFAGGR (226 aa). Residues Cys-80, Cys-84, and Cys-87 each contribute to the [4Fe-4S] cluster site. Residues Cys-123, Cys-156, Cys-215, and Arg-285 each coordinate [2Fe-2S] cluster.

It belongs to the radical SAM superfamily. Biotin synthase family. Homodimer. The cofactor is [4Fe-4S] cluster. Requires [2Fe-2S] cluster as cofactor.

It carries out the reaction (4R,5S)-dethiobiotin + (sulfur carrier)-SH + 2 reduced [2Fe-2S]-[ferredoxin] + 2 S-adenosyl-L-methionine = (sulfur carrier)-H + biotin + 2 5'-deoxyadenosine + 2 L-methionine + 2 oxidized [2Fe-2S]-[ferredoxin]. The protein operates within cofactor biosynthesis; biotin biosynthesis; biotin from 7,8-diaminononanoate: step 2/2. Catalyzes the conversion of dethiobiotin (DTB) to biotin by the insertion of a sulfur atom into dethiobiotin via a radical-based mechanism. The protein is Biotin synthase of Mycolicibacterium paratuberculosis (strain ATCC BAA-968 / K-10) (Mycobacterium paratuberculosis).